Here is a 64-residue protein sequence, read N- to C-terminus: UPF0370 protein YE1145 (64 aa).

A helical membrane pass occupies residues 3 to 23 (WLADYWWVVLIILVGMILNGI). The interval 36 to 64 (SNKPEIPPHRDNNAQWDDDDDWPDKDKKK) is disordered.

It belongs to the UPF0370 family.

Its subcellular location is the cell membrane. The chain is UPF0370 protein YE1145 from Yersinia enterocolitica serotype O:8 / biotype 1B (strain NCTC 13174 / 8081).